Here is a 211-residue protein sequence, read N- to C-terminus: Beta-crystallin B3 (211 aa).

Met-1 bears the N-acetylmethionine mark. Residue Ala-2 is modified to N-acetylalanine; in Beta-crystallin B3, N-terminally processed. The N-terminal arm stretch occupies residues 2–23 (AEQHGAPEQAAAGKSHGDLGGS). Beta/gamma crystallin 'Greek key' domains follow at residues 24–63 (YKVILYELENFQGKRCELSAECPSLTDSLLEKVGSIQVES) and 64–108 (GPWL…RPLN). Residues 109–113 (IDSPH) are connecting peptide. 2 consecutive Beta/gamma crystallin 'Greek key' domains span residues 114–155 (HKLH…RAIN) and 156–198 (GTWV…RRIR). The interval 200–211 (QKWHKRGRFPSS) is C-terminal arm.

This sequence belongs to the beta/gamma-crystallin family. As to quaternary structure, homo/heterodimer, or complexes of higher-order. The structure of beta-crystallin oligomers seems to be stabilized through interactions between the N-terminal arms.

In terms of biological role, crystallins are the dominant structural components of the vertebrate eye lens. This chain is Beta-crystallin B3 (CRYBB3), found in Homo sapiens (Human).